Reading from the N-terminus, the 207-residue chain is Imidazoleglycerol-phosphate dehydratase (207 aa).

It belongs to the imidazoleglycerol-phosphate dehydratase family.

The protein localises to the cytoplasm. The catalysed reaction is D-erythro-1-(imidazol-4-yl)glycerol 3-phosphate = 3-(imidazol-4-yl)-2-oxopropyl phosphate + H2O. It participates in amino-acid biosynthesis; L-histidine biosynthesis; L-histidine from 5-phospho-alpha-D-ribose 1-diphosphate: step 6/9. The sequence is that of Imidazoleglycerol-phosphate dehydratase (hisB) from Azospirillum brasilense.